Consider the following 212-residue polypeptide: MAIGLVGKKCGMTRVFTETGASIPVTVVEVDANRITQIKTNDTDGYQAIQITTGERRDSRVTAAQKGHFAKAGVKAGRGVWEFRVTEEELEGREAGSEIAADLFEAGQLVDVTGQSKGKGFQGGVKRHNFSMQDATHGNSVSHRVLGSTGQNQSPGKVFKGKKMPGQMGNKRVTVQGLEVVSVDAEKGLLVIKGAIPGANGGDVIVRPSIKA.

Positions 147–166 (GSTGQNQSPGKVFKGKKMPG) are disordered. Residue glutamine 153 is modified to N5-methylglutamine.

Belongs to the universal ribosomal protein uL3 family. As to quaternary structure, part of the 50S ribosomal subunit. Forms a cluster with proteins L14 and L19. In terms of processing, methylated by PrmB.

Its function is as follows. One of the primary rRNA binding proteins, it binds directly near the 3'-end of the 23S rRNA, where it nucleates assembly of the 50S subunit. The sequence is that of Large ribosomal subunit protein uL3 from Psychrobacter sp. (strain PRwf-1).